We begin with the raw amino-acid sequence, 203 residues long: A-type ATP synthase subunit E (203 aa).

It belongs to the V-ATPase E subunit family. Has multiple subunits with at least A(3), B(3), C, D, E, F, H, I and proteolipid K(x).

The protein localises to the cell membrane. In terms of biological role, component of the A-type ATP synthase that produces ATP from ADP in the presence of a proton gradient across the membrane. This chain is A-type ATP synthase subunit E, found in Methanococcus maripaludis (strain DSM 14266 / JCM 13030 / NBRC 101832 / S2 / LL).